The primary structure comprises 198 residues: Peroxiredoxin-2 (198 aa).

Alanine 2 bears the N-acetylalanine mark. The Thioredoxin domain maps to 6-164; sequence AHIGKPAPDF…ALRLVQAFQY (159 aa). Cysteine 51 serves as the catalytic Cysteine sulfenic acid (-SOH) intermediate. Serine 112 bears the Phosphoserine mark. At threonine 182 the chain carries Phosphothreonine. Lysine 196 is modified (N6-acetyllysine).

It belongs to the peroxiredoxin family. AhpC/Prx1 subfamily. Homodimer; disulfide-linked, upon oxidation. 5 homodimers assemble to form a ring-like decamer. Interacts with TIPIN. In terms of processing, the enzyme can be inactivated by further oxidation of the cysteine sulfenic acid (C(P)-SOH) to sulphinic acid (C(P)-SO2H) instead of its condensation to a disulfide bond. It can be reactivated by forming a transient disulfide bond with sulfiredoxin SRXN1, which reduces the cysteine sulfinic acid in an ATP- and Mg-dependent manner. Acetylation increases resistance to transition to high molecular-mass complexes. Deacetylated by HDAC6 which decreases reducing activity.

Its subcellular location is the cytoplasm. The enzyme catalyses a hydroperoxide + [thioredoxin]-dithiol = an alcohol + [thioredoxin]-disulfide + H2O. Thiol-specific peroxidase that catalyzes the reduction of hydrogen peroxide and organic hydroperoxides to water and alcohols, respectively. Plays a role in cell protection against oxidative stress by detoxifying peroxides and as sensor of hydrogen peroxide-mediated signaling events. Might participate in the signaling cascades of growth factors and tumor necrosis factor-alpha by regulating the intracellular concentrations of H(2)O(2). In Rattus norvegicus (Rat), this protein is Peroxiredoxin-2 (Prdx2).